A 424-amino-acid polypeptide reads, in one-letter code: Probable methyltransferase EP424R (424 aa).

One can recognise an Adrift-type SAM-dependent 2'-O-MTase domain in the interval 103 to 315 (QIVTNAWLKM…TYIVGKNRLR (213 aa)). Residues Gly135 and Asp228 each contribute to the S-adenosyl-L-methionine site. Lys268 functions as the Proton acceptor in the catalytic mechanism.

It localises to the virion. The polypeptide is Probable methyltransferase EP424R (Ornithodoros (relapsing fever ticks)).